The following is a 109-amino-acid chain: Sperm-specific class P protein 19 (109 aa).

In terms of domain architecture, MSP spans 1–109 (MSLTADPPAC…TVTIPMSATA (109 aa)).

In terms of assembly, monomer. Expressed at higher level in testis.

The polypeptide is Sperm-specific class P protein 19 (ssp-19) (Caenorhabditis elegans).